The following is a 141-amino-acid chain: NADPH-dependent 7-cyano-7-deazaguanine reductase (141 aa).

Cys56 acts as the Thioimide intermediate in catalysis. Asp63 serves as the catalytic Proton donor. Substrate contacts are provided by residues 78–80 and 97–98; these read VEL and HE.

This sequence belongs to the GTP cyclohydrolase I family. QueF type 1 subfamily.

It is found in the cytoplasm. It carries out the reaction 7-aminomethyl-7-carbaguanine + 2 NADP(+) = 7-cyano-7-deazaguanine + 2 NADPH + 3 H(+). It participates in tRNA modification; tRNA-queuosine biosynthesis. Functionally, catalyzes the NADPH-dependent reduction of 7-cyano-7-deazaguanine (preQ0) to 7-aminomethyl-7-deazaguanine (preQ1). This chain is NADPH-dependent 7-cyano-7-deazaguanine reductase, found in Trichodesmium erythraeum (strain IMS101).